The sequence spans 369 residues: Tyrosine-protein phosphatase non-receptor type 5 (369 aa).

Ser-49 carries the phosphoserine; by PKA modification. The residue at position 59 (Thr-59) is a Phosphothreonine; by MAPK. Ser-72 carries the phosphoserine; by MAPK modification. Residues 104 to 359 form the Tyrosine-protein phosphatase domain; it reads LQAEFFEIPM…QFVHHAMSLY (256 aa). Residues Asp-265, 300–306, and Gln-344 contribute to the substrate site; that span reads CSAGIGR. Cys-300 functions as the Phosphocysteine intermediate in the catalytic mechanism.

It belongs to the protein-tyrosine phosphatase family. Non-receptor class subfamily. In terms of processing, phosphorylation at Ser-49 by PKA deactivates PTPN5. Phosphorylation at Thr-59 and Ser-72 by MAPKs stabilizes the phosphatase, dephosphorylation of these sites results in ubiquitin-mediated degradation of the active phosphatase. Expressed in the central nervous system except in the cerebellum. Enriched within the striatum relative to other brain areas.

The protein localises to the cytoplasm. The catalysed reaction is O-phospho-L-tyrosyl-[protein] + H2O = L-tyrosyl-[protein] + phosphate. Functionally, may regulate the activity of several effector molecules involved in synaptic plasticity and neuronal cell survival, including MAPKs, Src family kinases and NMDA receptors. The polypeptide is Tyrosine-protein phosphatase non-receptor type 5 (Ptpn5) (Rattus norvegicus (Rat)).